The sequence spans 428 residues: Putative FBD-associated F-box protein At5g56390 (428 aa).

Positions 2–50 constitute an F-box domain; sequence DKISQLHDELLLGILSLLPNAKDVVATMVLSKRWRYLWMMVPSLVYDDS. The 51-residue stretch at 344–394 folds into the FBD domain; sequence CWNETSLVPEYLLPSLETFEWVDYEGTKTEKQVVAFILRIASCLKQATIVS.

In Arabidopsis thaliana (Mouse-ear cress), this protein is Putative FBD-associated F-box protein At5g56390.